The chain runs to 443 residues: C4-dicarboxylate transport protein (443 aa).

Transmembrane regions (helical) follow at residues 10–30, 46–66, 78–98, 143–163, 199–219, 224–244, 291–311, 332–352, and 354–374; these read SLYF…HFYP, LIKM…IAGM, YALL…LIVV, IVGA…VIFG, PIGA…GSLV, LMIC…GGIC, VVGL…SIYL, ITLL…TGSG, and IVLA…LALI.

It belongs to the dicarboxylate/amino acid:cation symporter (DAACS) (TC 2.A.23) family.

It is found in the cell inner membrane. Its function is as follows. Responsible for the transport of dicarboxylates such as succinate, fumarate, and malate from the periplasm across the membrane. In Pseudomonas fluorescens (strain SBW25), this protein is C4-dicarboxylate transport protein.